Reading from the N-terminus, the 594-residue chain is Arginine--tRNA ligase (594 aa).

The short motif at 133–143 (ANPTGPMNIVS) is the 'HIGH' region element.

This sequence belongs to the class-I aminoacyl-tRNA synthetase family. Monomer.

The protein localises to the cytoplasm. It catalyses the reaction tRNA(Arg) + L-arginine + ATP = L-arginyl-tRNA(Arg) + AMP + diphosphate. This Leptospira biflexa serovar Patoc (strain Patoc 1 / Ames) protein is Arginine--tRNA ligase.